The chain runs to 455 residues: Bifunctional protein GlmU (455 aa).

Residues 1 to 226 (MSLEIVILAA…AMEVQGANDR (226 aa)) form a pyrophosphorylase region. Residues 8-11 (LAAG), lysine 22, glutamine 73, 78-79 (GT), 99-101 (YGD), glycine 136, glutamate 151, asparagine 166, and asparagine 224 each bind UDP-N-acetyl-alpha-D-glucosamine. Aspartate 101 provides a ligand contact to Mg(2+). A Mg(2+)-binding site is contributed by asparagine 224. The tract at residues 227 to 247 (KQLAELERHYQLRAGRRLMAQ) is linker. An N-acetyltransferase region spans residues 248-455 (GVTLRDPARF…WKRPEKIKKD (208 aa)). UDP-N-acetyl-alpha-D-glucosamine contacts are provided by arginine 330 and lysine 348. Histidine 360 functions as the Proton acceptor in the catalytic mechanism. Residues tyrosine 363 and asparagine 374 each contribute to the UDP-N-acetyl-alpha-D-glucosamine site. Acetyl-CoA contacts are provided by residues alanine 377, 383–384 (NY), serine 402, alanine 420, and arginine 437.

In the N-terminal section; belongs to the N-acetylglucosamine-1-phosphate uridyltransferase family. This sequence in the C-terminal section; belongs to the transferase hexapeptide repeat family. In terms of assembly, homotrimer. Mg(2+) serves as cofactor.

The protein resides in the cytoplasm. It carries out the reaction alpha-D-glucosamine 1-phosphate + acetyl-CoA = N-acetyl-alpha-D-glucosamine 1-phosphate + CoA + H(+). The catalysed reaction is N-acetyl-alpha-D-glucosamine 1-phosphate + UTP + H(+) = UDP-N-acetyl-alpha-D-glucosamine + diphosphate. The protein operates within nucleotide-sugar biosynthesis; UDP-N-acetyl-alpha-D-glucosamine biosynthesis; N-acetyl-alpha-D-glucosamine 1-phosphate from alpha-D-glucosamine 6-phosphate (route II): step 2/2. Its pathway is nucleotide-sugar biosynthesis; UDP-N-acetyl-alpha-D-glucosamine biosynthesis; UDP-N-acetyl-alpha-D-glucosamine from N-acetyl-alpha-D-glucosamine 1-phosphate: step 1/1. It participates in bacterial outer membrane biogenesis; LPS lipid A biosynthesis. Its function is as follows. Catalyzes the last two sequential reactions in the de novo biosynthetic pathway for UDP-N-acetylglucosamine (UDP-GlcNAc). The C-terminal domain catalyzes the transfer of acetyl group from acetyl coenzyme A to glucosamine-1-phosphate (GlcN-1-P) to produce N-acetylglucosamine-1-phosphate (GlcNAc-1-P), which is converted into UDP-GlcNAc by the transfer of uridine 5-monophosphate (from uridine 5-triphosphate), a reaction catalyzed by the N-terminal domain. This is Bifunctional protein GlmU from Pseudomonas fluorescens (strain ATCC BAA-477 / NRRL B-23932 / Pf-5).